A 690-amino-acid polypeptide reads, in one-letter code: Eukaryotic translation initiation factor 3 subunit B (690 aa).

The segment covering 1–11 (MAKKKSEEHSG) has biased composition (basic and acidic residues). Positions 1 to 36 (MAKKKSEEHSGADANDSDYQEEPNFEDPPGFVDNIS) are disordered. The span at 15 to 25 (NDSDYQEEPNF) shows a compositional bias: acidic residues. Residues 57–141 (SVVVVDNIPK…HTFAVNLFTD (85 aa)) form the RRM domain. WD repeat units follow at residues 207-246 (TRER…KIQK), 293-331 (DGMS…LLDL), 334-369 (IKIP…TLME), 442-484 (EIRE…KPSL), and 530-575 (PDHF…IKRT). Residues 595-645 (EEKQKEIKKNLKKYYAAFEQKDRLRLTRASKELLEKRSQLRETFMEYRNKR) are a coiled coil.

It belongs to the eIF-3 subunit B family. Component of the eukaryotic translation initiation factor 3 (eIF-3) complex. The eIF-3 complex interacts with pix. Interacts with mxt.

The protein resides in the cytoplasm. In terms of biological role, RNA-binding component of the eukaryotic translation initiation factor 3 (eIF-3) complex, which is involved in protein synthesis of a specialized repertoire of mRNAs and, together with other initiation factors, stimulates binding of mRNA and methionyl-tRNAi to the 40S ribosome. The eIF-3 complex specifically targets and initiates translation of a subset of mRNAs involved in cell proliferation. This Drosophila simulans (Fruit fly) protein is Eukaryotic translation initiation factor 3 subunit B.